Reading from the N-terminus, the 102-residue chain is S-phase delaying protein 2 (102 aa).

The disordered stretch occupies residues 43–62 (FPSYHKDQTDRNELPQQKHD). Residues 46-62 (YHKDQTDRNELPQQKHD) show a composition bias toward basic and acidic residues.

This sequence belongs to the DIF1/spd1 family.

It localises to the cytoplasm. The protein localises to the nucleus. In terms of biological role, regulates the ribonucleotide reductase activity. The polypeptide is S-phase delaying protein 2 (spd2) (Schizosaccharomyces pombe (strain 972 / ATCC 24843) (Fission yeast)).